Here is a 392-residue protein sequence, read N- to C-terminus: Nucleosome assembly protein 1-like 1-A (392 aa).

Residues 1 to 37 (MANIDNKGQTELDQQDMEDVEDVEEEETGEDANSKAR) form a disordered region. Acidic residues predominate over residues 13 to 30 (DQQDMEDVEDVEEEETGE). The NAP1L motif motif lies at 126-150 (YEPTEEECEWKVEEEDISGDLKEKA). The Nuclear localization signal motif lies at 273–279 (IKKKQKH). Residues 346-377 (AIEDDDDDYDEEGEEADDEEGEEEADEDNDPD) show a composition bias toward acidic residues. The disordered stretch occupies residues 346 to 392 (AIEDDDDDYDEEGEEADDEEGEEEADEDNDPDYEPKKGQNPAECKQQ).

The protein belongs to the nucleosome assembly protein (NAP) family. Forms homomultimers. Interacts with histone B4. Interacts with the B-type cyclins ccnb1 and ccnb2. Post-translationally, phosphorylated by cyclin B-cdc2 kinase complexes. In terms of tissue distribution, initially expressed throughout the embryo with expression higher at the animal pole. Becomes localized to presumptive ectoderm by gastrula stages. By stage 18 (neurula), expressed in the neural plate and posterior to the cement gland. In late neurula/early tailbud stages, expressed in the neural crest, neural tube, eyes, tailbud and ventral blood islands. Adult expression is predominantly in ovaries.

The protein resides in the cytoplasm. Its subcellular location is the nucleus. Its function is as follows. Acts as a chaperone for the linker histone to facilitate deposition of histone B4 onto linker DNA. Required for both remodeling of sperm chromatin into nucleosomes, and linker histone binding to nucleosome core dimers. Plays a role in tissue-specific gene regulation. Required for primitive hemopoiesis, acting upstream of tal1/scl. This is Nucleosome assembly protein 1-like 1-A (nap1l1-a) from Xenopus laevis (African clawed frog).